The primary structure comprises 809 residues: Trimethylamine-N-oxide reductase 2 (809 aa).

Residues 1–31 (MTLTRREFIKHSGIAAGTLVVTSAAPLPAWA) constitute a signal peptide (tat-type signal). Ser176 contributes to the Mo-bis(molybdopterin guanine dinucleotide) binding site.

The protein belongs to the prokaryotic molybdopterin-containing oxidoreductase family. Mo-bis(molybdopterin guanine dinucleotide) serves as cofactor. Post-translationally, predicted to be exported by the Tat system. The position of the signal peptide cleavage has not been experimentally proven.

Its subcellular location is the periplasm. It catalyses the reaction trimethylamine + 2 Fe(III)-[cytochrome c] + H2O = trimethylamine N-oxide + 2 Fe(II)-[cytochrome c] + 3 H(+). In terms of biological role, reduces trimethylamine-N-oxide (TMAO) into trimethylamine; an anaerobic reaction coupled to energy-yielding reactions. Can also reduce other N- and S-oxide compounds such as 4-methylmorpholine-N-oxide and biotin sulfoxide (BSO), but with a lower catalytic efficiency. The protein is Trimethylamine-N-oxide reductase 2 (torZ) of Escherichia coli O6:H1 (strain CFT073 / ATCC 700928 / UPEC).